The sequence spans 354 residues: UDP-N-acetylglucosamine--N-acetylmuramyl-(pentapeptide) pyrophosphoryl-undecaprenol N-acetylglucosamine transferase (354 aa).

UDP-N-acetyl-alpha-D-glucosamine-binding positions include 15–17, N127, R163, S191, I244, 263–268, and Q288; these read TGG and ALTVSE.

This sequence belongs to the glycosyltransferase 28 family. MurG subfamily.

It is found in the cell inner membrane. The catalysed reaction is di-trans,octa-cis-undecaprenyl diphospho-N-acetyl-alpha-D-muramoyl-L-alanyl-D-glutamyl-meso-2,6-diaminopimeloyl-D-alanyl-D-alanine + UDP-N-acetyl-alpha-D-glucosamine = di-trans,octa-cis-undecaprenyl diphospho-[N-acetyl-alpha-D-glucosaminyl-(1-&gt;4)]-N-acetyl-alpha-D-muramoyl-L-alanyl-D-glutamyl-meso-2,6-diaminopimeloyl-D-alanyl-D-alanine + UDP + H(+). Its pathway is cell wall biogenesis; peptidoglycan biosynthesis. Functionally, cell wall formation. Catalyzes the transfer of a GlcNAc subunit on undecaprenyl-pyrophosphoryl-MurNAc-pentapeptide (lipid intermediate I) to form undecaprenyl-pyrophosphoryl-MurNAc-(pentapeptide)GlcNAc (lipid intermediate II). In Serratia proteamaculans (strain 568), this protein is UDP-N-acetylglucosamine--N-acetylmuramyl-(pentapeptide) pyrophosphoryl-undecaprenol N-acetylglucosamine transferase.